Reading from the N-terminus, the 179-residue chain is Large ribosomal subunit protein uL5 (179 aa).

This sequence belongs to the universal ribosomal protein uL5 family. As to quaternary structure, part of the 50S ribosomal subunit; part of the 5S rRNA/L5/L18/L25 subcomplex. Contacts the 5S rRNA and the P site tRNA. Forms a bridge to the 30S subunit in the 70S ribosome.

This is one of the proteins that bind and probably mediate the attachment of the 5S RNA into the large ribosomal subunit, where it forms part of the central protuberance. In the 70S ribosome it contacts protein S13 of the 30S subunit (bridge B1b), connecting the 2 subunits; this bridge is implicated in subunit movement. Contacts the P site tRNA; the 5S rRNA and some of its associated proteins might help stabilize positioning of ribosome-bound tRNAs. The sequence is that of Large ribosomal subunit protein uL5 from Lysinibacillus sphaericus (strain C3-41).